Consider the following 289-residue polypeptide: BTB/POZ domain-containing protein KCTD7 (289 aa).

Positions 1-35 are disordered; that stretch reads MVVVTGREPDSRRQDGAMSSSDAEDDFLEPATPTA. In terms of domain architecture, BTB spans 51–149; the sequence is EVVPLNIGGA…QLENMQPLKG (99 aa).

As to quaternary structure, interacts with CUL3.

Its subcellular location is the cell membrane. It localises to the cytoplasm. The protein localises to the cytosol. In terms of biological role, may be involved in the control of excitability of cortical neurons. The polypeptide is BTB/POZ domain-containing protein KCTD7 (KCTD7) (Homo sapiens (Human)).